The primary structure comprises 1064 residues: Carbamoyl phosphate synthase pyrimidine-specific large chain (1064 aa).

Residues 1-401 (MPKRRDIETI…SLLKAVRSLE (401 aa)) are carboxyphosphate synthetic domain. The ATP site is built by R129, R169, G175, G176, R208, I210, G241, I242, H243, Q284, and E298. The ATP-grasp 1 domain occupies 133 to 327 (RALMNELGEP…IAKLAAKIAV (195 aa)). 3 residues coordinate Mg(2+): Q284, E298, and N300. 3 residues coordinate Mn(2+): Q284, E298, and N300. Residues 402–546 (IGVHHLELNE…YSTYEEENES (145 aa)) are oligomerization domain. Positions 547 to 929 (IVTEKPSVIV…ALYKGLVASG (383 aa)) are carbamoyl phosphate synthetic domain. In terms of domain architecture, ATP-grasp 2 spans 671–861 (EQALSELGIP…MANLATKAIL (191 aa)). Residues R707, R746, I748, E752, G777, V778, H779, S780, Q820, and E832 each contribute to the ATP site. Residues Q820, E832, and N834 each coordinate Mg(2+). Q820, E832, and N834 together coordinate Mn(2+). Positions 930–1064 (IQIQPHGAVL…TAMTEGLVRS (135 aa)) constitute an MGS-like domain. An allosteric domain region spans residues 930-1064 (IQIQPHGAVL…TAMTEGLVRS (135 aa)).

Belongs to the CarB family. In terms of assembly, composed of two chains; the small (or glutamine) chain promotes the hydrolysis of glutamine to ammonia, which is used by the large (or ammonia) chain to synthesize carbamoyl phosphate. Tetramer of heterodimers (alpha,beta)4. Mg(2+) is required as a cofactor. The cofactor is Mn(2+).

The catalysed reaction is hydrogencarbonate + L-glutamine + 2 ATP + H2O = carbamoyl phosphate + L-glutamate + 2 ADP + phosphate + 2 H(+). It carries out the reaction hydrogencarbonate + NH4(+) + 2 ATP = carbamoyl phosphate + 2 ADP + phosphate + 2 H(+). The protein operates within amino-acid biosynthesis; L-arginine biosynthesis; carbamoyl phosphate from bicarbonate: step 1/1. Its pathway is pyrimidine metabolism; UMP biosynthesis via de novo pathway; (S)-dihydroorotate from bicarbonate: step 1/3. Functionally, small subunit of the glutamine-dependent carbamoyl phosphate synthetase (CPSase). CPSase catalyzes the formation of carbamoyl phosphate from the ammonia moiety of glutamine, carbonate, and phosphate donated by ATP, constituting the first step of the biosynthetic pathway leading to pyrimidine nucleotides. The large subunit (synthetase) binds the substrates ammonia (free or transferred from glutamine from the small subunit), hydrogencarbonate and ATP and carries out an ATP-coupled ligase reaction, activating hydrogencarbonate by forming carboxy phosphate which reacts with ammonia to form carbamoyl phosphate. This Geobacillus stearothermophilus (Bacillus stearothermophilus) protein is Carbamoyl phosphate synthase pyrimidine-specific large chain (pyrAB).